Reading from the N-terminus, the 427-residue chain is Outer capsid protein P8 (427 aa).

This sequence belongs to the phytoreovirus outer capsid protein P8 family. In terms of assembly, homotrimer. Homomultimer.

Its subcellular location is the virion. The protein resides in the host cytoplasm. Its function is as follows. Capsid protein which self-assembles to form the outer icosahedral capsid with a T=13 symmetry, about 70 nm in diameter and consisting of 780 molecules capsid proteins. The chain is Outer capsid protein P8 from Catharanthus roseus (Madagascar periwinkle).